We begin with the raw amino-acid sequence, 632 residues long: Chaperone protein DnaK (632 aa).

The residue at position 199 (T199) is a Phosphothreonine; by autocatalysis. Residues 597–611 are compositionally biased toward low complexity; that stretch reads AAQQAGQAEGQAAQE. Positions 597 to 632 are disordered; it reads AAQQAGQAEGQAAQEPSQSTGNAQAEATDAEYEEVK. Over residues 612 to 621 the composition is skewed to polar residues; it reads PSQSTGNAQA.

Belongs to the heat shock protein 70 family.

Acts as a chaperone. This is Chaperone protein DnaK from Amoebophilus asiaticus (strain 5a2).